The chain runs to 130 residues: S-adenosylmethionine decarboxylase proenzyme (130 aa).

Residue Ser-63 is the Schiff-base intermediate with substrate; via pyruvic acid of the active site. Position 63 is a pyruvic acid (Ser); by autocatalysis (Ser-63). Catalysis depends on His-68, which acts as the Proton acceptor; for processing activity. Catalysis depends on Cys-83, which acts as the Proton donor; for catalytic activity.

It belongs to the prokaryotic AdoMetDC family. Type 1 subfamily. In terms of assembly, heterotetramer of two alpha and two beta chains arranged as a dimer of alpha/beta heterodimers. Pyruvate serves as cofactor. Post-translationally, is synthesized initially as an inactive proenzyme. Formation of the active enzyme involves a self-maturation process in which the active site pyruvoyl group is generated from an internal serine residue via an autocatalytic post-translational modification. Two non-identical subunits are generated from the proenzyme in this reaction, and the pyruvate is formed at the N-terminus of the alpha chain, which is derived from the carboxyl end of the proenzyme. The post-translation cleavage follows an unusual pathway, termed non-hydrolytic serinolysis, in which the side chain hydroxyl group of the serine supplies its oxygen atom to form the C-terminus of the beta chain, while the remainder of the serine residue undergoes an oxidative deamination to produce ammonia and the pyruvoyl group blocking the N-terminus of the alpha chain.

It carries out the reaction S-adenosyl-L-methionine + H(+) = S-adenosyl 3-(methylsulfanyl)propylamine + CO2. It functions in the pathway amine and polyamine biosynthesis; S-adenosylmethioninamine biosynthesis; S-adenosylmethioninamine from S-adenosyl-L-methionine: step 1/1. Functionally, catalyzes the decarboxylation of S-adenosylmethionine to S-adenosylmethioninamine (dcAdoMet), the propylamine donor required for the synthesis of the polyamines spermine and spermidine from the diamine putrescine. This chain is S-adenosylmethionine decarboxylase proenzyme, found in Thermosipho melanesiensis (strain DSM 12029 / CIP 104789 / BI429).